A 459-amino-acid chain; its full sequence is MAPSVTLPLTTAILAIARLVAAQQPGTSTPEVHPKLTTYKCTKSGGCVAQDTSVVLDWNYRWMHDANYNSCTVNGGVNTTLCPDEATCGKNCFIEGVDYAASGVTTSGSSLTMNQYMPSSSGGYSSVSPRLYLLDSDGEYVMLKLNGQELSFDVDLSALPCGENGSLYLSQMDENGGANQYNTAGANYGSGYCDAQCPVQTWRNGTLNTSHQGFCCNEMDILEGNSRANALTPHSCTATACDSAGCGFNPYGSGYKSYYGPGDTVDTSKTFTIITQFNTDNGSPSGNLVSITRKYQQNGVDIPSAQPGGDTISSCPSASAYGGLATMGKALSSGMVLVFSIWNDNSQYMNWLDSGNAGPCSSTEGNPSNILANNPNTHVVFSNIRWGDIGSTTNSTAPPPPPASSTTFSTTRRSSTTSSSPSCTQTHWGQCGGIGYSGCKTCTSGTTCQYSNDYYSQCL.

Residues 1–22 (MAPSVTLPLTTAILAIARLVAA) form the signal peptide. Residue Gln23 is modified to Pyrrolidone carboxylic acid. The tract at residues 23 to 397 (QQPGTSTPEV…DIGSTTNSTA (375 aa)) is catalytic. Intrachain disulfides connect Cys41-Cys47, Cys71-Cys92, Cys82-Cys88, Cys161-Cys360, Cys193-Cys216, Cys197-Cys215, Cys236-Cys241, and Cys246-Cys315. Asn78 carries an N-linked (GlcNAc) asparagine glycan. A glycan (N-linked (GlcNAc...) (high mannose) asparagine) is linked at Asn204. The Nucleophile role is filled by Glu218. The Proton donor/acceptor role is filled by Glu223. Residues 390 to 425 (GSTTNSTAPPPPPASSTTFSTTRRSSTTSSSPSCTQ) form a disordered region. An N-linked (GlcNAc...) asparagine glycan is attached at Asn394. The interval 398 to 423 (PPPPPASSTTFSTTRRSSTTSSSPSC) is linker. Residues 404 to 425 (SSTTFSTTRRSSTTSSSPSCTQ) are compositionally biased toward low complexity. Cystine bridges form between Cys423–Cys439, Cys431–Cys448, and Cys442–Cys458. One can recognise a CBM1 domain in the interval 423–459 (CTQTHWGQCGGIGYSGCKTCTSGTTCQYSNDYYSQCL).

It belongs to the glycosyl hydrolase 7 (cellulase C) family. Asn-204 contains mainly a high-mannose-type glycan (Hex(7-9)GlcNAc(2)), with a small fraction (8%) bearing a single GlcNAc at this site.

The protein resides in the secreted. It catalyses the reaction Endohydrolysis of (1-&gt;4)-beta-D-glucosidic linkages in cellulose, lichenin and cereal beta-D-glucans.. Endoglucanase (EG) that cleaves the internal beta-1,4-glucosidic bonds in cellulose. The degradation of cellulose involves an interplay between different cellulolytic enzymes. Hydrolysis starts with EGs, which cut internal glycosidic linkages to reduce the polymerization degree of the substrate and creates new chain ends for exocellobiohydrolases (CBHs). The CBH release the disaccharide cellobiose from the non-reducing end of the cellulose polymer chain. Finally, beta-1,4-glucosidases hydrolyze the cellobiose and other short cello-oligosaccharides into glucose units. This is Endoglucanase EG-1 (egl1) from Hypocrea jecorina (Trichoderma reesei).